The chain runs to 338 residues: Cell division protein ZipA (338 aa).

Over 1–2 the chain is Periplasmic; sequence MS. A helical membrane pass occupies residues 3 to 23; the sequence is LREWLIAIGTLVIIGIVIDGV. Topologically, residues 24 to 338 are cytoplasmic; sequence RRMRRARKES…FERKQRSQRA (315 aa). Positions 33 to 192 are disordered; that stretch reads SMAISSGMGA…RKNQPLAGAN (160 aa). Composition is skewed to basic and acidic residues over residues 70–81 and 138–162; these read TLEDRGYLKRDM and EVDR…RAEE.

This sequence belongs to the ZipA family. As to quaternary structure, interacts with FtsZ via their C-terminal domains.

The protein localises to the cell inner membrane. Functionally, essential cell division protein that stabilizes the FtsZ protofilaments by cross-linking them and that serves as a cytoplasmic membrane anchor for the Z ring. Also required for the recruitment to the septal ring of downstream cell division proteins. This Marinobacter nauticus (strain ATCC 700491 / DSM 11845 / VT8) (Marinobacter aquaeolei) protein is Cell division protein ZipA.